The chain runs to 207 residues: Small ribosomal subunit protein uS4 (207 aa).

The disordered stretch occupies residues 31 to 53; the sequence is KAKFDSKPGQHGRTSGARTSDFG. The S4 RNA-binding domain occupies 97–160; the sequence is SRLDNVVYRM…KKQNRIVEAL (64 aa).

It belongs to the universal ribosomal protein uS4 family. In terms of assembly, part of the 30S ribosomal subunit. Contacts protein S5. The interaction surface between S4 and S5 is involved in control of translational fidelity.

In terms of biological role, one of the primary rRNA binding proteins, it binds directly to 16S rRNA where it nucleates assembly of the body of the 30S subunit. Its function is as follows. With S5 and S12 plays an important role in translational accuracy. This Albidiferax ferrireducens (strain ATCC BAA-621 / DSM 15236 / T118) (Rhodoferax ferrireducens) protein is Small ribosomal subunit protein uS4.